The primary structure comprises 190 residues: dCTP deaminase, dUMP-forming (190 aa).

Residues Lys101–Arg106, Asp119, Thr127–Glu129, Gln148, Tyr162, and Gln174 each bind dCTP. Residue Glu129 is the Proton donor/acceptor of the active site. The segment at Tyr162–Gln184 is disordered. A compositionally biased stretch (polar residues) spans Tyr171 to Gln184.

The protein belongs to the dCTP deaminase family. Homotrimer.

It carries out the reaction dCTP + 2 H2O = dUMP + NH4(+) + diphosphate. It functions in the pathway pyrimidine metabolism; dUMP biosynthesis; dUMP from dCTP: step 1/1. Its function is as follows. Bifunctional enzyme that catalyzes both the deamination of dCTP to dUTP and the hydrolysis of dUTP to dUMP without releasing the toxic dUTP intermediate. The polypeptide is dCTP deaminase, dUMP-forming (Mycobacterium sp. (strain JLS)).